We begin with the raw amino-acid sequence, 433 residues long: D-amino acid dehydrogenase (433 aa).

3–17 (VLVLGSGVIGTASAY) contacts FAD.

Belongs to the DadA oxidoreductase family. The cofactor is FAD.

It carries out the reaction a D-alpha-amino acid + A + H2O = a 2-oxocarboxylate + AH2 + NH4(+). It participates in amino-acid degradation; D-alanine degradation; NH(3) and pyruvate from D-alanine: step 1/1. Functionally, oxidative deamination of D-amino acids. In Pseudomonas putida (strain W619), this protein is D-amino acid dehydrogenase.